Here is a 119-residue protein sequence, read N- to C-terminus: uncharacterized protein (119 aa).

The next 2 helical transmembrane spans lie at 7-27 (ILHN…LLLV) and 32-52 (YFFE…FLML).

It localises to the membrane. This is an uncharacterized protein from Saccharomyces cerevisiae (strain ATCC 204508 / S288c) (Baker's yeast).